Consider the following 1122-residue polypeptide: Histone deacetylase 5 (1122 aa).

Residues 1–22 (MNSPNESDGMSGREPSLEILPR) are disordered. Lys-35 participates in a covalent cross-link: Glycyl lysine isopeptide (Lys-Gly) (interchain with G-Cter in SUMO2). The tract at residues 196 to 281 (KEPTPGGLNH…KVAERRSSPL (86 aa)) is disordered. Positions 247 to 258 (DSRDDFPLRKTA) are enriched in basic and acidic residues. Ser-259 carries the phosphoserine; by AMPK, CaMK1, SIK1 and PKD/PRKD1 modification. Residues 272 to 281 (KVAERRSSPL) show a composition bias toward basic and acidic residues. Thr-292 is modified (phosphothreonine; by PKC). 2 disordered regions span residues 302-343 (GAGP…NIPT) and 481-504 (MRTVGKLPRHRPLSRTQSSPLPQS). A compositionally biased stretch (low complexity) spans 312-327 (NSAPGSGPSSPNSSHS). Polar residues predominate over residues 328–340 (TIAENGFTGSVPN). A compositionally biased stretch (low complexity) spans 494 to 504 (SRTQSSPLPQS). Phosphoserine; by AMPK, CaMK1, SIK1 and PKD/PRKD1 is present on Ser-498. An N6-acetyllysine modification is found at Lys-533. Positions 536–625 (TKTGELPRQP…GPDLEEPGAG (90 aa)) are disordered. The segment covering 581-621 (STQEDLEEEDEEEDGEEEEDCIQVKDEEGESGAEEGPDLEE) has biased composition (acidic residues). Phosphoserine occurs at positions 611 and 661. The segment at 684–1028 (GVVYDTFMLK…VSALLSVELQ (345 aa)) is histone deacetylase. Zn(2+)-binding residues include Cys-696, Cys-698, His-704, and Cys-781. Residue His-833 is part of the active site. Positions 1081 to 1122 (EEAETVSAMALLSVGAEQAQAAAAREHSPRPAEEPMEQEPAL) match the Nuclear export signal motif. The tract at residues 1097–1122 (EQAQAAAAREHSPRPAEEPMEQEPAL) is disordered. Basic and acidic residues predominate over residues 1104-1113 (AREHSPRPAE). The residue at position 1108 (Ser-1108) is a Phosphoserine.

Belongs to the histone deacetylase family. HD type 2 subfamily. As to quaternary structure, interacts with AHRR, BAHD1, BCOR, HDAC7, HDAC9, CTBP1, MEF2C, NCOR2, NRIP1, PHB2 and a 14-3-3 chaperone protein. Interacts with BCL6, DDIT3/CHOP, GRK5, KDM5B and MYOCD. Interacts with EP300 in the presence of TFAP2C. Interacts with ANKRA2. Interacts with CUL7 (as part of the 3M complex); negatively regulated by ANKRA2. Interacts with ZBTB7B; the interaction allows the recruitment of HDAC4 on CD8 loci for deacetylation and possible inhibition of CD8 genes expression. Interacts with RARA. In terms of processing, phosphorylated by AMPK, CaMK1, SIK1 and PRKD1 at Ser-259 and Ser-498. The phosphorylation is required for the export to the cytoplasm and inhibition. Phosphorylated by the PKC kinases PKN1 and PKN2, impairing nuclear import. Phosphorylated by GRK5, leading to nuclear export of HDAC5 and allowing MEF2-mediated transcription. Post-translationally, ubiquitinated. Polyubiquitination however does not lead to its degradation.

The protein resides in the nucleus. The protein localises to the cytoplasm. It catalyses the reaction N(6)-acetyl-L-lysyl-[histone] + H2O = L-lysyl-[histone] + acetate. In terms of biological role, responsible for the deacetylation of lysine residues on the N-terminal part of the core histones (H2A, H2B, H3 and H4). Histone deacetylation gives a tag for epigenetic repression and plays an important role in transcriptional regulation, cell cycle progression and developmental events. Histone deacetylases act via the formation of large multiprotein complexes. Involved in muscle maturation by repressing transcription of myocyte enhancer MEF2C. During muscle differentiation, it shuttles into the cytoplasm, allowing the expression of myocyte enhancer factors. Serves as a corepressor of RARA and causes its deacetylation. In association with RARA, plays a role in the repression of microRNA-10a and thereby in the inflammatory response. This Pongo abelii (Sumatran orangutan) protein is Histone deacetylase 5 (HDAC5).